The sequence spans 216 residues: Guanylate kinase (216 aa).

The 179-residue stretch at Gly-15–His-193 folds into the Guanylate kinase-like domain. ATP is bound at residue Ala-22 to Ser-29.

This sequence belongs to the guanylate kinase family.

The protein localises to the cytoplasm. It carries out the reaction GMP + ATP = GDP + ADP. Functionally, essential for recycling GMP and indirectly, cGMP. The polypeptide is Guanylate kinase (Cupriavidus metallidurans (strain ATCC 43123 / DSM 2839 / NBRC 102507 / CH34) (Ralstonia metallidurans)).